We begin with the raw amino-acid sequence, 174 residues long: MTIGRAKVYATLSKIFYHLFYDEAIPKDCREIIEKFGEIDFNLRSVLVRELRGSVLIKDMPQSLAEVYESVMKDFYERYGFQASELHADHIAVELAFMSKLVEREISLAQQMKEEELYKIRAAQHRFIKAHLQPLVKNLPSAPLLNFVRDFVREDAKYLYSSLVGEKNEGADNN.

The protein belongs to the TorD/DmsD family. In terms of assembly, monomer.

Its subcellular location is the cytoplasm. Binds specifically to the Tat signal peptide of the TtrA subunit of the tetrathionate reductase. The chain is Tat proofreading chaperone TtrD (ttrD) from Archaeoglobus fulgidus (strain ATCC 49558 / DSM 4304 / JCM 9628 / NBRC 100126 / VC-16).